The chain runs to 287 residues: Inorganic pyrophosphatase (287 aa).

Arg79 is a binding site for diphosphate. Positions 116, 121, and 153 each coordinate Mg(2+). The segment covering Asn244 to Leu258 has biased composition (polar residues). The tract at residues Asn244–Pro269 is disordered.

This sequence belongs to the PPase family. Mg(2+) serves as cofactor.

Its subcellular location is the cytoplasm. It carries out the reaction diphosphate + H2O = 2 phosphate + H(+). Its function is as follows. Involved in osmoadaptation. The protein is Inorganic pyrophosphatase (ipp1) of Emericella nidulans (strain FGSC A4 / ATCC 38163 / CBS 112.46 / NRRL 194 / M139) (Aspergillus nidulans).